The primary structure comprises 180 residues: MWGCGWSRILVLLLLMCMALMARGTYGAYICSPNPGRLRISCALSVLDQRLWWEIQYSSGRLTRVLVFHDEGEEGDDVHLTDTHHCTSCTHPYVISLVTPLTINATLRLLIRDGMYGRGEKELCIAHLPTLRDIRTCRVDADLGLLYAVCLILSFSIVTAALWKVDYDRSVAVVSKSYKS.

Residues 1–27 (MWGCGWSRILVLLLLMCMALMARGTYG) form the signal peptide. The chain crosses the membrane as a helical span at residues 143 to 163 (LGLLYAVCLILSFSIVTAALW).

The protein belongs to the HHV-5 UL121 protein family.

It localises to the host membrane. The protein is Membrane protein UL121 (UL121) of Human cytomegalovirus (strain Merlin) (HHV-5).